Reading from the N-terminus, the 104-residue chain is Iron-sulfur cluster assembly protein CyaY (104 aa).

This sequence belongs to the frataxin family.

Functionally, involved in iron-sulfur (Fe-S) cluster assembly. May act as a regulator of Fe-S biogenesis. The sequence is that of Iron-sulfur cluster assembly protein CyaY from Aliivibrio fischeri (strain ATCC 700601 / ES114) (Vibrio fischeri).